A 320-amino-acid polypeptide reads, in one-letter code: Ferrochelatase (320 aa).

2 residues coordinate Fe cation: histidine 194 and glutamate 275.

It belongs to the ferrochelatase family. As to quaternary structure, monomer.

The protein resides in the cytoplasm. The enzyme catalyses heme b + 2 H(+) = protoporphyrin IX + Fe(2+). It participates in porphyrin-containing compound metabolism; protoheme biosynthesis; protoheme from protoporphyrin-IX: step 1/1. In terms of biological role, catalyzes the ferrous insertion into protoporphyrin IX. The chain is Ferrochelatase from Escherichia coli (strain 55989 / EAEC).